We begin with the raw amino-acid sequence, 456 residues long: Bifunctional protein GlmU (456 aa).

A pyrophosphorylase region spans residues 1-229 (MTKKALSAVI…VMEVEGANNR (229 aa)). Residues 11–14 (LAAG), Lys-25, Gln-76, 81–82 (GT), 103–105 (YGD), Gly-140, Glu-154, Asn-169, and Asn-227 each bind UDP-N-acetyl-alpha-D-glucosamine. Asp-105 is a Mg(2+) binding site. Position 227 (Asn-227) interacts with Mg(2+). The segment at 230–250 (LQLAALERYFQNKQASKLLLE) is linker. An N-acetyltransferase region spans residues 251-456 (GVMIYDPARF…QGWQRPIKKK (206 aa)). Arg-333 and Lys-351 together coordinate UDP-N-acetyl-alpha-D-glucosamine. His-363 serves as the catalytic Proton acceptor. UDP-N-acetyl-alpha-D-glucosamine is bound by residues Tyr-366 and Asn-377. Residues Ala-380, 386-387 (NY), Ser-405, Ala-423, and Arg-440 contribute to the acetyl-CoA site.

In the N-terminal section; belongs to the N-acetylglucosamine-1-phosphate uridyltransferase family. It in the C-terminal section; belongs to the transferase hexapeptide repeat family. As to quaternary structure, homotrimer. It depends on Mg(2+) as a cofactor.

The protein resides in the cytoplasm. It carries out the reaction alpha-D-glucosamine 1-phosphate + acetyl-CoA = N-acetyl-alpha-D-glucosamine 1-phosphate + CoA + H(+). The catalysed reaction is N-acetyl-alpha-D-glucosamine 1-phosphate + UTP + H(+) = UDP-N-acetyl-alpha-D-glucosamine + diphosphate. It participates in nucleotide-sugar biosynthesis; UDP-N-acetyl-alpha-D-glucosamine biosynthesis; N-acetyl-alpha-D-glucosamine 1-phosphate from alpha-D-glucosamine 6-phosphate (route II): step 2/2. Its pathway is nucleotide-sugar biosynthesis; UDP-N-acetyl-alpha-D-glucosamine biosynthesis; UDP-N-acetyl-alpha-D-glucosamine from N-acetyl-alpha-D-glucosamine 1-phosphate: step 1/1. It functions in the pathway bacterial outer membrane biogenesis; LPS lipid A biosynthesis. Its function is as follows. Catalyzes the last two sequential reactions in the de novo biosynthetic pathway for UDP-N-acetylglucosamine (UDP-GlcNAc). The C-terminal domain catalyzes the transfer of acetyl group from acetyl coenzyme A to glucosamine-1-phosphate (GlcN-1-P) to produce N-acetylglucosamine-1-phosphate (GlcNAc-1-P), which is converted into UDP-GlcNAc by the transfer of uridine 5-monophosphate (from uridine 5-triphosphate), a reaction catalyzed by the N-terminal domain. This is Bifunctional protein GlmU from Haemophilus influenzae (strain 86-028NP).